Consider the following 135-residue polypeptide: ATP synthase epsilon chain (135 aa).

A disordered region spans residues 101 to 122; sequence TAVTKLEGQPSTPEKVKAQQLF.

It belongs to the ATPase epsilon chain family. In terms of assembly, F-type ATPases have 2 components, CF(1) - the catalytic core - and CF(0) - the membrane proton channel. CF(1) has five subunits: alpha(3), beta(3), gamma(1), delta(1), epsilon(1). CF(0) has three main subunits: a, b and c.

Its subcellular location is the cellular thylakoid membrane. Its function is as follows. Produces ATP from ADP in the presence of a proton gradient across the membrane. The protein is ATP synthase epsilon chain of Synechococcus sp. (strain CC9311).